A 162-amino-acid polypeptide reads, in one-letter code: Interleukin-15 (162 aa).

A signal peptide spans 1–29 (MRISKPSLRSTSIQCYLCFLLNSHLITEA). Residues 30-48 (GIHVFVWGCISAGLPKTEA) constitute a propeptide that is removed on maturation. Disulfide bonds link cysteine 83-cysteine 133 and cysteine 90-cysteine 136. Asparagine 119 and asparagine 127 each carry an N-linked (GlcNAc...) asparagine glycan.

Belongs to the IL-15/IL-21 family.

Its subcellular location is the secreted. Its function is as follows. Cytokine that plays a major role in the development of inflammatory and protective immune responses to microbial invaders and parasites by modulating immune cells of both the innate and adaptive immune systems. Stimulates the proliferation of natural killer cells, T-cells and B-cells and promotes the secretion of several cytokines. In monocytes, induces the production of IL8 and monocyte chemotactic protein 1/CCL2, two chemokines that attract neutrophils and monocytes respectively to sites of infection. Unlike most cytokines, which are secreted in soluble form, IL15 is expressed in association with its high affinity IL15RA on the surface of IL15-producing cells and delivers signals to target cells that express IL2RB and IL2RG receptor subunits. Binding to its receptor triggers the phosphorylation of JAK1 and JAK3 and the recruitment and subsequent phosphorylation of signal transducer and activator of transcription-3/STAT3 and STAT5. In mast cells, induces the rapid tyrosine phosphorylation of STAT6 and thereby controls mast cell survival and release of cytokines such as IL4. The chain is Interleukin-15 (IL15) from Cavia porcellus (Guinea pig).